We begin with the raw amino-acid sequence, 345 residues long: Protein CHROMOSOME TRANSMISSION FIDELITY 7 (345 aa).

A CCHH-type zinc finger spans residues 96–120 (RHCAECGAKYAPGDELDEKNHQSFH).

It belongs to the acetyltransferase family. ECO subfamily. Autoacetylated. In terms of tissue distribution, expressed in roots, stems, leaves, young seedlings and flower buds. Detected in the embryo, but not in the endosperm.

Its subcellular location is the nucleus. The protein localises to the cytoplasm. Its function is as follows. Acetyltransferase required for the establishment of sister chromatid cohesion. Involved in preservation of genome integrity and meiosis. Required for DNA repair and for the regulation of chromosome segregation during mitotic cell division. Knock-down mutants are extremely dwarf. Regulator of sister chromatid cohesion in meiosis which negatively regulates cohesin association with chromatin, acting as an antagonist of WAPL1 and WAPL2. In Arabidopsis thaliana (Mouse-ear cress), this protein is Protein CHROMOSOME TRANSMISSION FIDELITY 7.